Here is a 314-residue protein sequence, read N- to C-terminus: Aspartate carbamoyltransferase catalytic subunit (314 aa).

2 residues coordinate carbamoyl phosphate: R63 and T64. K91 contributes to the L-aspartate binding site. 3 residues coordinate carbamoyl phosphate: R113, H143, and Q146. The L-aspartate site is built by R176 and R228. Residues A269 and P270 each contribute to the carbamoyl phosphate site.

Belongs to the aspartate/ornithine carbamoyltransferase superfamily. ATCase family. Heterododecamer (2C3:3R2) of six catalytic PyrB chains organized as two trimers (C3), and six regulatory PyrI chains organized as three dimers (R2).

The catalysed reaction is carbamoyl phosphate + L-aspartate = N-carbamoyl-L-aspartate + phosphate + H(+). It functions in the pathway pyrimidine metabolism; UMP biosynthesis via de novo pathway; (S)-dihydroorotate from bicarbonate: step 2/3. Its function is as follows. Catalyzes the condensation of carbamoyl phosphate and aspartate to form carbamoyl aspartate and inorganic phosphate, the committed step in the de novo pyrimidine nucleotide biosynthesis pathway. The polypeptide is Aspartate carbamoyltransferase catalytic subunit (Cutibacterium acnes (strain DSM 16379 / KPA171202) (Propionibacterium acnes)).